Consider the following 685-residue polypeptide: Sorbicillinoid biosynthetic cluster transcription factor sor4 (685 aa).

Low complexity predominate over residues 1-14; sequence MGSSATATTTGEST. The segment at 1–20 is disordered; the sequence is MGSSATATTTGESTRQQPGL. Positions 22–49 form a DNA-binding region, zn(2)-C6 fungal-type; that stretch reads CEECRRRKARCDRVRPKCGICADSGRNC. Positions 81–112 are disordered; that stretch reads GQNDAPSLPQERDSLGCPTPSEKVSPEGDLVS.

The protein localises to the nucleus. Functionally, transcription factor that acts as the main regulator of the gene cluster that mediates the biosynthesis of sorbicillinoids, a diverse group of yellow secondary metabolites that restrict growth of competing pathogenic fungi but not of bacteria. The protein is Sorbicillinoid biosynthetic cluster transcription factor sor4 of Hypocrea jecorina (strain QM6a) (Trichoderma reesei).